We begin with the raw amino-acid sequence, 82 residues long: RNA-binding protein Hfq (82 aa).

The Sm domain occupies 9-69; sequence DQLLNTARKD…ISTIIPAKII (61 aa).

This sequence belongs to the Hfq family. As to quaternary structure, homohexamer.

RNA chaperone that binds small regulatory RNA (sRNAs) and mRNAs to facilitate mRNA translational regulation in response to envelope stress, environmental stress and changes in metabolite concentrations. Also binds with high specificity to tRNAs. The sequence is that of RNA-binding protein Hfq from Leptospira borgpetersenii serovar Hardjo-bovis (strain L550).